The sequence spans 440 residues: Adenylosuccinate lyase (440 aa).

Residues Arg4–Tyr5, Lys67–Asp69, and Thr93–Ser94 contribute to the N(6)-(1,2-dicarboxyethyl)-AMP site. The Proton donor/acceptor role is filled by His141. Residue Gln212 coordinates N(6)-(1,2-dicarboxyethyl)-AMP. Residue Ser262 is the Proton donor/acceptor of the active site. Residues Ser263, Lys268–Asn270, Asn276, and Ser307–Phe311 each bind N(6)-(1,2-dicarboxyethyl)-AMP.

The protein belongs to the lyase 1 family. Adenylosuccinate lyase subfamily. Homotetramer. Residues from neighboring subunits contribute catalytic and substrate-binding residues to each active site.

The enzyme catalyses N(6)-(1,2-dicarboxyethyl)-AMP = fumarate + AMP. It carries out the reaction (2S)-2-[5-amino-1-(5-phospho-beta-D-ribosyl)imidazole-4-carboxamido]succinate = 5-amino-1-(5-phospho-beta-D-ribosyl)imidazole-4-carboxamide + fumarate. It functions in the pathway purine metabolism; AMP biosynthesis via de novo pathway; AMP from IMP: step 2/2. Its pathway is purine metabolism; IMP biosynthesis via de novo pathway; 5-amino-1-(5-phospho-D-ribosyl)imidazole-4-carboxamide from 5-amino-1-(5-phospho-D-ribosyl)imidazole-4-carboxylate: step 2/2. Its function is as follows. Catalyzes two reactions in de novo purine nucleotide biosynthesis. Catalyzes the breakdown of 5-aminoimidazole- (N-succinylocarboxamide) ribotide (SAICAR or 2-[5-amino-1-(5-phospho-beta-D-ribosyl)imidazole-4-carboxamido]succinate) to 5-aminoimidazole-4-carboxamide ribotide (AICAR or 5-amino-1-(5-phospho-beta-D-ribosyl)imidazole-4-carboxamide) and fumarate, and of adenylosuccinate (ADS or N(6)-(1,2-dicarboxyethyl)-AMP) to adenosine monophosphate (AMP) and fumarate. The chain is Adenylosuccinate lyase (purB) from Helicobacter pylori (strain J99 / ATCC 700824) (Campylobacter pylori J99).